The chain runs to 115 residues: MAMTLRDIINKLLRRQPASASTARERLQLVLAHDRSDLSTELLDQMRKEILEVVAKYVEIDVDEGAVSLETEDRMTALVANLPIKRTMTGQIQLKEPKNQSEVDSPETEGKDQNS.

The interval 89–115 (TGQIQLKEPKNQSEVDSPETEGKDQNS) is disordered.

Belongs to the MinE family.

Its function is as follows. Prevents the cell division inhibition by proteins MinC and MinD at internal division sites while permitting inhibition at polar sites. This ensures cell division at the proper site by restricting the formation of a division septum at the midpoint of the long axis of the cell. The chain is Cell division topological specificity factor from Prochlorococcus marinus (strain NATL2A).